We begin with the raw amino-acid sequence, 49 residues long: Large ribosomal subunit protein eL40 (49 aa).

It belongs to the eukaryotic ribosomal protein eL40 family.

This Archaeoglobus fulgidus (strain ATCC 49558 / DSM 4304 / JCM 9628 / NBRC 100126 / VC-16) protein is Large ribosomal subunit protein eL40.